The following is a 736-amino-acid chain: Phosphoribosylformylglycinamidine synthase subunit PurL (736 aa).

Histidine 50 is a catalytic residue. ATP is bound by residues tyrosine 53 and lysine 92. Glutamate 94 serves as a coordination point for Mg(2+). Substrate contacts are provided by residues 95–98 (SHNH) and arginine 117. Histidine 96 (proton acceptor) is an active-site residue. Aspartate 118 lines the Mg(2+) pocket. Residue glutamine 241 coordinates substrate. Aspartate 269 provides a ligand contact to Mg(2+). 313 to 315 (ESQ) contributes to the substrate binding site. ATP-binding residues include aspartate 495 and glycine 532. Asparagine 533 lines the Mg(2+) pocket. Residue serine 535 participates in substrate binding.

Belongs to the FGAMS family. In terms of assembly, monomer. Part of the FGAM synthase complex composed of 1 PurL, 1 PurQ and 2 PurS subunits.

The protein resides in the cytoplasm. The enzyme catalyses N(2)-formyl-N(1)-(5-phospho-beta-D-ribosyl)glycinamide + L-glutamine + ATP + H2O = 2-formamido-N(1)-(5-O-phospho-beta-D-ribosyl)acetamidine + L-glutamate + ADP + phosphate + H(+). The protein operates within purine metabolism; IMP biosynthesis via de novo pathway; 5-amino-1-(5-phospho-D-ribosyl)imidazole from N(2)-formyl-N(1)-(5-phospho-D-ribosyl)glycinamide: step 1/2. Functionally, part of the phosphoribosylformylglycinamidine synthase complex involved in the purines biosynthetic pathway. Catalyzes the ATP-dependent conversion of formylglycinamide ribonucleotide (FGAR) and glutamine to yield formylglycinamidine ribonucleotide (FGAM) and glutamate. The FGAM synthase complex is composed of three subunits. PurQ produces an ammonia molecule by converting glutamine to glutamate. PurL transfers the ammonia molecule to FGAR to form FGAM in an ATP-dependent manner. PurS interacts with PurQ and PurL and is thought to assist in the transfer of the ammonia molecule from PurQ to PurL. The protein is Phosphoribosylformylglycinamidine synthase subunit PurL of Bartonella quintana (strain Toulouse) (Rochalimaea quintana).